Here is a 367-residue protein sequence, read N- to C-terminus: Ferrochelatase (367 aa).

2 residues coordinate Fe cation: His-226 and Glu-307.

The protein belongs to the ferrochelatase family.

It localises to the cytoplasm. The catalysed reaction is heme b + 2 H(+) = protoporphyrin IX + Fe(2+). The protein operates within porphyrin-containing compound metabolism; protoheme biosynthesis; protoheme from protoporphyrin-IX: step 1/1. Its function is as follows. Catalyzes the ferrous insertion into protoporphyrin IX. This chain is Ferrochelatase, found in Burkholderia pseudomallei (strain 668).